A 407-amino-acid chain; its full sequence is GTPase Obg (407 aa).

An Obg domain is found at 1–159; sequence MKFVDEVSIR…RDLKLEMKVL (159 aa). Residues 128-148 form a disordered region; sequence TRFKSSTNRAPRQTTPGKPGE. Over residues 129-143 the composition is skewed to polar residues; sequence RFKSSTNRAPRQTTP. One can recognise an OBG-type G domain in the interval 160–333; the sequence is ADVGLLGLPN…LTRDIMRYLE (174 aa). Residues 166–173, 191–195, 213–216, 283–286, and 314–316 each bind GTP; these read GLPNAGKS, FTTLV, DIPG, NKCD, and SAI. Mg(2+)-binding residues include Ser-173 and Thr-193. Residues 376–407 form a disordered region; that stretch reads SGVKSVHDIGDDDWDEEDVDDEDGPEIIYVRD. Acidic residues predominate over residues 385–400; that stretch reads GDDDWDEEDVDDEDGP.

Belongs to the TRAFAC class OBG-HflX-like GTPase superfamily. OBG GTPase family. As to quaternary structure, monomer. The cofactor is Mg(2+).

The protein localises to the cytoplasm. An essential GTPase which binds GTP, GDP and possibly (p)ppGpp with moderate affinity, with high nucleotide exchange rates and a fairly low GTP hydrolysis rate. Plays a role in control of the cell cycle, stress response, ribosome biogenesis and in those bacteria that undergo differentiation, in morphogenesis control. The chain is GTPase Obg from Pseudomonas fluorescens (strain Pf0-1).